The following is a 310-amino-acid chain: Protein-L-isoaspartate O-methyltransferase (310 aa).

Disordered regions lie at residues M1–A46 and A60–K79. The segment covering E14–A34 has biased composition (basic and acidic residues). Residues A35 to A46 show a composition bias toward low complexity. Residue S157 is part of the active site.

It belongs to the methyltransferase superfamily. L-isoaspartyl/D-aspartyl protein methyltransferase family.

The protein localises to the cytoplasm. It carries out the reaction [protein]-L-isoaspartate + S-adenosyl-L-methionine = [protein]-L-isoaspartate alpha-methyl ester + S-adenosyl-L-homocysteine. Functionally, catalyzes the methyl esterification of L-isoaspartyl residues in peptides and proteins that result from spontaneous decomposition of normal L-aspartyl and L-asparaginyl residues. It plays a role in the repair and/or degradation of damaged proteins. This chain is Protein-L-isoaspartate O-methyltransferase, found in Burkholderia ambifaria (strain ATCC BAA-244 / DSM 16087 / CCUG 44356 / LMG 19182 / AMMD) (Burkholderia cepacia (strain AMMD)).